Reading from the N-terminus, the 111-residue chain is Gene 81 protein (111 aa).

This Mycobacterium (Mycobacteriophage L5) protein is Gene 81 protein (81).